The chain runs to 545 residues: Ubiquitin carboxyl-terminal hydrolase 17-like protein C (545 aa).

One can recognise a USP domain in the interval 51-348 (CGLQNTGNSC…NAYVLFYVQQ (298 aa)). Residue Cys60 is the Nucleophile of the active site. The active-site Proton acceptor is the His307. Disordered stretches follow at residues 368-442 (DPEY…QKLG) and 489-539 (WGRD…KQGQ). A compositionally biased stretch (basic residues) spans 374–385 (KKSRRKKHKKKS). Composition is skewed to basic and acidic residues over residues 393–404 (EPCKNREKRATK) and 489–505 (WGRD…HNAD). Residues 508–519 (LTSQDPVNTGQL) are compositionally biased toward polar residues. The span at 524–537 (GRRRSKKGKNKNKQ) shows a compositional bias: basic residues.

Belongs to the peptidase C19 family. USP17 subfamily. As to expression, expressed in T cells.

It is found in the nucleus. It localises to the endoplasmic reticulum. It carries out the reaction Thiol-dependent hydrolysis of ester, thioester, amide, peptide and isopeptide bonds formed by the C-terminal Gly of ubiquitin (a 76-residue protein attached to proteins as an intracellular targeting signal).. Its function is as follows. Deubiquitinating enzyme that removes conjugated ubiquitin from specific proteins to regulate different cellular processes. Important for preimplantation stage embryonic development. In Mus musculus (Mouse), this protein is Ubiquitin carboxyl-terminal hydrolase 17-like protein C.